We begin with the raw amino-acid sequence, 168 residues long: Crossover junction endodeoxyribonuclease RuvC (168 aa).

Residues aspartate 7, glutamate 66, and aspartate 138 contribute to the active site. 3 residues coordinate Mg(2+): aspartate 7, glutamate 66, and aspartate 138.

It belongs to the RuvC family. In terms of assembly, homodimer which binds Holliday junction (HJ) DNA. The HJ becomes 2-fold symmetrical on binding to RuvC with unstacked arms; it has a different conformation from HJ DNA in complex with RuvA. In the full resolvosome a probable DNA-RuvA(4)-RuvB(12)-RuvC(2) complex forms which resolves the HJ. Requires Mg(2+) as cofactor.

Its subcellular location is the cytoplasm. The catalysed reaction is Endonucleolytic cleavage at a junction such as a reciprocal single-stranded crossover between two homologous DNA duplexes (Holliday junction).. In terms of biological role, the RuvA-RuvB-RuvC complex processes Holliday junction (HJ) DNA during genetic recombination and DNA repair. Endonuclease that resolves HJ intermediates. Cleaves cruciform DNA by making single-stranded nicks across the HJ at symmetrical positions within the homologous arms, yielding a 5'-phosphate and a 3'-hydroxyl group; requires a central core of homology in the junction. The consensus cleavage sequence is 5'-(A/T)TT(C/G)-3'. Cleavage occurs on the 3'-side of the TT dinucleotide at the point of strand exchange. HJ branch migration catalyzed by RuvA-RuvB allows RuvC to scan DNA until it finds its consensus sequence, where it cleaves and resolves the cruciform DNA. In Cereibacter sphaeroides (strain ATCC 17029 / ATH 2.4.9) (Rhodobacter sphaeroides), this protein is Crossover junction endodeoxyribonuclease RuvC.